A 194-amino-acid polypeptide reads, in one-letter code: Fimbrial protein 987P (194 aa).

An N-terminal signal peptide occupies residues 1 to 23 (MRMKKSALTLAVLSSLFSGYSLA). The cysteines at positions 46 and 85 are disulfide-linked.

Belongs to the fimbrial protein family.

The protein localises to the fimbrium. The chain is Fimbrial protein 987P (fasA) from Escherichia coli.